Consider the following 180-residue polypeptide: ATP-dependent protease subunit HslV (180 aa).

The active site involves T5. Na(+)-binding residues include G165, C168, and T171.

This sequence belongs to the peptidase T1B family. HslV subfamily. A double ring-shaped homohexamer of HslV is capped on each side by a ring-shaped HslU homohexamer. The assembly of the HslU/HslV complex is dependent on binding of ATP.

Its subcellular location is the cytoplasm. It carries out the reaction ATP-dependent cleavage of peptide bonds with broad specificity.. Its activity is regulated as follows. Allosterically activated by HslU binding. Functionally, protease subunit of a proteasome-like degradation complex believed to be a general protein degrading machinery. This is ATP-dependent protease subunit HslV from Helicobacter pylori (strain J99 / ATCC 700824) (Campylobacter pylori J99).